A 424-amino-acid polypeptide reads, in one-letter code: DUF21 domain-containing protein At4g33700 (424 aa).

Over 1 to 11 the chain is Extracellular; it reads MAVEYVCCSPN. The region spanning 8–191 is the CNNM transmembrane domain; it reads CSPNFFIHIA…GKGGELTHDE (184 aa). A helical transmembrane segment spans residues 12-32; the sequence is FFIHIAVIVFLVLFAGLMSGL. Residues 33-70 are Cytoplasmic-facing; the sequence is TLGLMSLSLVDLEVLAKSGTPEHRKYAAKILPVVKNQH. A helical transmembrane segment spans residues 71-91; sequence LLLVTLLICNAAAMETLPIFL. The Extracellular segment spans residues 92–94; the sequence is DGL. The chain crosses the membrane as a helical span at residues 95–115; that stretch reads VTAWGAILISVTLILLFGEII. The Cytoplasmic portion of the chain corresponds to 116–136; sequence PQSICSRYGLAIGATVAPFVR. A helical transmembrane segment spans residues 137–157; the sequence is VLVFICLPVAWPISKLLDFLL. Topologically, residues 158–424 are extracellular; it reads GHRRAALFRR…DETDHHFEDS (267 aa). Residues 210-271 enclose the CBS 1 domain; sequence MTPISDIFVI…TINPDEEIPV (62 aa). 2 N-linked (GlcNAc...) asparagine glycosylation sites follow: Asn273 and Asn319. CBS domains follow at residues 275-331 and 355-416; these read TIRR…DVDS and PNRA…IFDE. Disordered regions lie at residues 321-340 and 355-374; these read SVKEARVDVDSEGTPTPQER and PNRASSFKGGSKSKKWSKDN. Phosphoserine is present on Ser331.

The protein resides in the membrane. This is DUF21 domain-containing protein At4g33700 (CBSDUF6) from Arabidopsis thaliana (Mouse-ear cress).